The chain runs to 365 residues: uncharacterized protein (365 aa).

Residues 1-133 (MVLAKQWVLK…RKLDKNKVGK (133 aa)) are Cytoplasmic-facing. A helical membrane pass occupies residues 134 to 154 (LWWYLSVLGGTSLTAYFIFFT). Residues 155 to 169 (YAQLQEREEDYGKVY) lie on the Extracellular side of the membrane. A helical transmembrane segment spans residues 170–190 (LISGAAGAVGTVCIQLALNVF). The Cytoplasmic segment spans residues 191–365 (KASKVIAIAG…KLITKVNNEE (175 aa)).

Its subcellular location is the membrane. This is an uncharacterized protein from Saccharomyces cerevisiae (strain ATCC 204508 / S288c) (Baker's yeast).